Reading from the N-terminus, the 93-residue chain is Putative pterin-4-alpha-carbinolamine dehydratase (93 aa).

It belongs to the pterin-4-alpha-carbinolamine dehydratase family.

It catalyses the reaction (4aS,6R)-4a-hydroxy-L-erythro-5,6,7,8-tetrahydrobiopterin = (6R)-L-erythro-6,7-dihydrobiopterin + H2O. The polypeptide is Putative pterin-4-alpha-carbinolamine dehydratase (Mycolicibacterium vanbaalenii (strain DSM 7251 / JCM 13017 / BCRC 16820 / KCTC 9966 / NRRL B-24157 / PYR-1) (Mycobacterium vanbaalenii)).